We begin with the raw amino-acid sequence, 216 residues long: Ribosomal RNA large subunit methyltransferase E (216 aa).

S-adenosyl-L-methionine is bound by residues Gly67, Trp69, Asp87, Asp103, and Asp128. The active-site Proton acceptor is the Lys168.

Belongs to the class I-like SAM-binding methyltransferase superfamily. RNA methyltransferase RlmE family.

It localises to the cytoplasm. The enzyme catalyses uridine(2552) in 23S rRNA + S-adenosyl-L-methionine = 2'-O-methyluridine(2552) in 23S rRNA + S-adenosyl-L-homocysteine + H(+). Specifically methylates the uridine in position 2552 of 23S rRNA at the 2'-O position of the ribose in the fully assembled 50S ribosomal subunit. This chain is Ribosomal RNA large subunit methyltransferase E, found in Acinetobacter baylyi (strain ATCC 33305 / BD413 / ADP1).